An 88-amino-acid polypeptide reads, in one-letter code: Small cysteine and glycine repeat-containing protein 1 (88 aa).

The 10 X 2 AA repeats of CG stretch occupies residues 4–72; the sequence is CGCGGCGGCG…TCSSCGYSCG (69 aa).

Belongs to the KRTAP type 28 family.

In the hair cortex, hair keratin intermediate filaments are embedded in an interfilamentous matrix, consisting of hair keratin-associated proteins (KRTAP), which are essential for the formation of a rigid and resistant hair shaft through their extensive disulfide bond cross-linking with abundant cysteine residues of hair keratins. The matrix proteins include the high-sulfur and high-glycine-tyrosine keratins. The sequence is that of Small cysteine and glycine repeat-containing protein 1 from Homo sapiens (Human).